The chain runs to 402 residues: Prophage integrase IntZ (402 aa).

Positions 103–183 (AGFKKVAEDW…RIGEIFKFAV (81 aa)) constitute a Core-binding (CB) domain. A Tyr recombinase domain is found at 206-381 (GHNAWIPISE…AYLKQRRAMM (176 aa)). Residues R244, K271, H332, R335, and H359 contribute to the active site. The O-(3'-phospho-DNA)-tyrosine intermediate role is filled by Y368.

It belongs to the 'phage' integrase family.

In terms of biological role, integrase is necessary for integration of the phage into the host genome by site-specific recombination. In conjunction with excisionase, integrase is also necessary for excision of the prophage from the host genome. This Escherichia coli (strain K12) protein is Prophage integrase IntZ (intZ).